The primary structure comprises 225 residues: 2-amino-5-formylamino-6-ribosylaminopyrimidin-4(3H)-one 5'-monophosphate deformylase (225 aa).

The Fe cation site is built by E28, H30, D39, and H107.

It belongs to the creatininase superfamily. FAPy deformylase family. Homodimer. It depends on Fe(2+) as a cofactor. Requires Zn(2+) as cofactor.

It catalyses the reaction 2-amino-5-formylamino-6-(5-phospho-D-ribosylamino)pyrimidin-4(3H)-one + H2O = 2,5-diamino-6-(1-D-ribosylamino)pyrimidin-4(3H)-one 5'-phosphate + formate + H(+). It functions in the pathway cofactor biosynthesis; coenzyme F420 biosynthesis. The protein operates within cofactor biosynthesis; riboflavin biosynthesis. Catalyzes the hydrolysis of the formamide of 2-amino-5-formylamino-6-ribosylamino-4(3H)-pyrimidinone 5'-monophosphate (FAPy) to form 2,5-diamino-6-ribosylamino-4(3H)-pyrimidinone 5'-phosphate (APy). This is 2-amino-5-formylamino-6-ribosylaminopyrimidin-4(3H)-one 5'-monophosphate deformylase from Methanocaldococcus sp. (strain FS406-22).